The primary structure comprises 127 residues: MARVKRSLNAKKKRREILKSAKGYRGQRSRLYRKAKEQWLHSMTYAYRDRRARKSEFRKLWITRINAAARMNDITYNRLIQGLRLAEIEVDRKVLADLAVNDFAAFSAICEAAKAALPADVNAPKAA.

Belongs to the bacterial ribosomal protein bL20 family.

Its function is as follows. Binds directly to 23S ribosomal RNA and is necessary for the in vitro assembly process of the 50S ribosomal subunit. It is not involved in the protein synthesizing functions of that subunit. The chain is Large ribosomal subunit protein bL20 from Corynebacterium diphtheriae (strain ATCC 700971 / NCTC 13129 / Biotype gravis).